The primary structure comprises 63 residues: uncharacterized protein (63 aa).

An N-terminal signal peptide occupies residues methionine 1–alanine 21.

This is an uncharacterized protein from Haemophilus influenzae (strain ATCC 51907 / DSM 11121 / KW20 / Rd).